The primary structure comprises 211 residues: FMN-dependent NADH:quinone oxidoreductase 2 (211 aa).

FMN is bound by residues Ser10 and Ser17–Ser19.

Belongs to the azoreductase type 1 family. Homodimer. FMN is required as a cofactor.

It carries out the reaction 2 a quinone + NADH + H(+) = 2 a 1,4-benzosemiquinone + NAD(+). The enzyme catalyses N,N-dimethyl-1,4-phenylenediamine + anthranilate + 2 NAD(+) = 2-(4-dimethylaminophenyl)diazenylbenzoate + 2 NADH + 2 H(+). Its function is as follows. Quinone reductase that provides resistance to thiol-specific stress caused by electrophilic quinones. In terms of biological role, also exhibits azoreductase activity. Catalyzes the reductive cleavage of the azo bond in aromatic azo compounds to the corresponding amines. This chain is FMN-dependent NADH:quinone oxidoreductase 2, found in Listeria monocytogenes serovar 1/2a (strain ATCC BAA-679 / EGD-e).